A 498-amino-acid polypeptide reads, in one-letter code: ATP synthase subunit beta, chloroplastic (498 aa).

172–179 (GGAGVGKT) lines the ATP pocket.

This sequence belongs to the ATPase alpha/beta chains family. As to quaternary structure, F-type ATPases have 2 components, CF(1) - the catalytic core - and CF(0) - the membrane proton channel. CF(1) has five subunits: alpha(3), beta(3), gamma(1), delta(1), epsilon(1). CF(0) has four main subunits: a(1), b(1), b'(1) and c(9-12).

It is found in the plastid. The protein localises to the chloroplast thylakoid membrane. The catalysed reaction is ATP + H2O + 4 H(+)(in) = ADP + phosphate + 5 H(+)(out). Its function is as follows. Produces ATP from ADP in the presence of a proton gradient across the membrane. The catalytic sites are hosted primarily by the beta subunits. The protein is ATP synthase subunit beta, chloroplastic of Populus tremuloides (Quaking aspen).